We begin with the raw amino-acid sequence, 383 residues long: ATP phosphoribosyltransferase regulatory subunit (383 aa).

This sequence belongs to the class-II aminoacyl-tRNA synthetase family. HisZ subfamily. Heteromultimer composed of HisG and HisZ subunits.

The protein localises to the cytoplasm. It functions in the pathway amino-acid biosynthesis; L-histidine biosynthesis; L-histidine from 5-phospho-alpha-D-ribose 1-diphosphate: step 1/9. Functionally, required for the first step of histidine biosynthesis. May allow the feedback regulation of ATP phosphoribosyltransferase activity by histidine. The protein is ATP phosphoribosyltransferase regulatory subunit of Paraburkholderia phymatum (strain DSM 17167 / CIP 108236 / LMG 21445 / STM815) (Burkholderia phymatum).